The following is a 380-amino-acid chain: WAT1-related protein At2g37460 (380 aa).

Helical transmembrane passes span 16-36 (FISMVVLQVGLAGMDILSKAV), 45-65 (VLVVYRHAVATIVMAPFAFYF), 71-91 (PKMTLMIFFKISLLGLLEPVI), 107-127 (FATAMYNVLPAITFVLAYIFG), 142-162 (VVGTLATVGGAMIMTLVKGPV), 187-207 (GAVLVTIGCFSYACFMILQAI), 216-236 (LSLTAWICLMGTIEGTAVALV), 254-274 (LTATYSGIVCSALAYYVGGVV), 282-302 (FVTAFSPLCMIIVAIMSTIIF), and 306-326 (MYLGRVLGAVVICAGLYLVIW). Positions 27 to 134 (AGMDILSKAV…IFGLERVKLR (108 aa)) constitute an EamA 1 domain. One can recognise an EamA 2 domain in the interval 196–325 (FSYACFMILQ…VICAGLYLVI (130 aa)).

Belongs to the drug/metabolite transporter (DMT) superfamily. Plant drug/metabolite exporter (P-DME) (TC 2.A.7.4) family.

The protein localises to the membrane. In Arabidopsis thaliana (Mouse-ear cress), this protein is WAT1-related protein At2g37460.